A 446-amino-acid polypeptide reads, in one-letter code: Ribosomal protein uS12 methylthiotransferase RimO (446 aa).

One can recognise an MTTase N-terminal domain in the interval 4-119; sequence LKVGLISLGC…LVENINNFIS (116 aa). The [4Fe-4S] cluster site is built by C13, C48, C82, C157, C161, and C164. The Radical SAM core domain maps to 143–373; that stretch reads TTKSHTAYLR…MMLQKHIIYS (231 aa). One can recognise a TRAM domain in the interval 376 to 442; sequence KYKIGNKYKV…EYDLVGVVYD (67 aa).

This sequence belongs to the methylthiotransferase family. RimO subfamily. The cofactor is [4Fe-4S] cluster.

The protein localises to the cytoplasm. It carries out the reaction L-aspartate(89)-[ribosomal protein uS12]-hydrogen + (sulfur carrier)-SH + AH2 + 2 S-adenosyl-L-methionine = 3-methylsulfanyl-L-aspartate(89)-[ribosomal protein uS12]-hydrogen + (sulfur carrier)-H + 5'-deoxyadenosine + L-methionine + A + S-adenosyl-L-homocysteine + 2 H(+). Functionally, catalyzes the methylthiolation of an aspartic acid residue of ribosomal protein uS12. This is Ribosomal protein uS12 methylthiotransferase RimO from Clostridium kluyveri (strain ATCC 8527 / DSM 555 / NBRC 12016 / NCIMB 10680 / K1).